Here is a 20-residue protein sequence, read N- to C-terminus: Large ribosomal subunit protein uL5 (20 aa).

The protein belongs to the universal ribosomal protein uL5 family. Part of the 50S ribosomal subunit; part of the 5S rRNA/L5/L18/L25 subcomplex. Contacts the 5S rRNA and the P site tRNA. Forms a bridge to the 30S subunit in the 70S ribosome.

Its function is as follows. This is one of the proteins that bind and probably mediate the attachment of the 5S RNA into the large ribosomal subunit, where it forms part of the central protuberance. In the 70S ribosome it contacts protein S13 of the 30S subunit (bridge B1b), connecting the two subunits; this bridge is implicated in subunit movement. Contacts the P site tRNA; the 5S rRNA and some of its associated proteins might help stabilize positioning of ribosome-bound tRNAs. The polypeptide is Large ribosomal subunit protein uL5 (rplE) (Bacillus cereus).